A 152-amino-acid polypeptide reads, in one-letter code: UPF0756 membrane protein Daud_1310 (152 aa).

A run of 4 helical transmembrane segments spans residues 14–34 (LVGV…LLFI), 51–71 (LELG…NGKI), 76–96 (IIYN…ALAT), and 112–132 (IIFG…GMPV).

This sequence belongs to the UPF0756 family.

It localises to the cell membrane. This Desulforudis audaxviator (strain MP104C) protein is UPF0756 membrane protein Daud_1310.